Reading from the N-terminus, the 66-residue chain is Small ribosomal subunit protein bS21B (66 aa).

Residues 38 to 66 (YVKPTQKRKIAKKAAISKAKKEARRSYSY) are disordered.

Belongs to the bacterial ribosomal protein bS21 family.

In Francisella tularensis subsp. tularensis (strain SCHU S4 / Schu 4), this protein is Small ribosomal subunit protein bS21B.